A 206-amino-acid chain; its full sequence is Oligoribonuclease (206 aa).

The Exonuclease domain maps to 20 to 183 (LVWLDMEMTG…ADIHESIDEL (164 aa)). Residue Tyr-141 is part of the active site.

The protein belongs to the oligoribonuclease family.

The protein localises to the cytoplasm. Functionally, 3'-to-5' exoribonuclease specific for small oligoribonucleotides. In Burkholderia ambifaria (strain ATCC BAA-244 / DSM 16087 / CCUG 44356 / LMG 19182 / AMMD) (Burkholderia cepacia (strain AMMD)), this protein is Oligoribonuclease.